The sequence spans 20 residues: Toxin b subunit beta (20 aa).

As to quaternary structure, toxin b is a heterodimer composed of toxin alpha and toxin beta. Expressed by the venom gland.

It localises to the secreted. Binds to sodium channels (Nav) and affects the channel activation process. This Androctonus crassicauda (Arabian fat-tailed scorpion) protein is Toxin b subunit beta.